We begin with the raw amino-acid sequence, 277 residues long: Ubiquinone biosynthesis protein COQ4, mitochondrial (277 aa).

The transit peptide at 1 to 14 (MLTKRALRTTDPYR) directs the protein to the mitochondrion. Residues His157, Asp158, His161, and Glu173 each coordinate Zn(2+).

Belongs to the COQ4 family. Component of a multi-subunit COQ enzyme complex, composed of at least COQ3, COQ4, COQ5, COQ6, COQ7 and COQ9. Requires Zn(2+) as cofactor.

Its subcellular location is the mitochondrion inner membrane. It carries out the reaction a 4-hydroxy-3-methoxy-5-(all-trans-polyprenyl)benzoate + H(+) = a 2-methoxy-6-(all-trans-polyprenyl)phenol + CO2. It functions in the pathway cofactor biosynthesis; ubiquinone biosynthesis. In terms of biological role, lyase that catalyzes the C1-decarboxylation of 4-hydroxy-3-methoxy-5-(all-trans-polyprenyl)benzoic acid into 2-methoxy-6-(all-trans-polyprenyl)phenol during ubiquinone biosynthesis. In Ajellomyces capsulatus (strain NAm1 / WU24) (Darling's disease fungus), this protein is Ubiquinone biosynthesis protein COQ4, mitochondrial.